Reading from the N-terminus, the 320-residue chain is Aspartate carbamoyltransferase catalytic subunit (320 aa).

Carbamoyl phosphate is bound by residues Arg-68 and Thr-69. An L-aspartate-binding site is contributed by Lys-96. Arg-118, His-148, and Gln-151 together coordinate carbamoyl phosphate. The L-aspartate site is built by Arg-181 and Arg-236. Gly-277 and Pro-278 together coordinate carbamoyl phosphate.

This sequence belongs to the aspartate/ornithine carbamoyltransferase superfamily. ATCase family. Heterododecamer (2C3:3R2) of six catalytic PyrB chains organized as two trimers (C3), and six regulatory PyrI chains organized as three dimers (R2).

It carries out the reaction carbamoyl phosphate + L-aspartate = N-carbamoyl-L-aspartate + phosphate + H(+). It participates in pyrimidine metabolism; UMP biosynthesis via de novo pathway; (S)-dihydroorotate from bicarbonate: step 2/3. Its function is as follows. Catalyzes the condensation of carbamoyl phosphate and aspartate to form carbamoyl aspartate and inorganic phosphate, the committed step in the de novo pyrimidine nucleotide biosynthesis pathway. The polypeptide is Aspartate carbamoyltransferase catalytic subunit (Acidovorax ebreus (strain TPSY) (Diaphorobacter sp. (strain TPSY))).